We begin with the raw amino-acid sequence, 521 residues long: GMP synthase [glutamine-hydrolyzing] (521 aa).

Residues 8-203 (KILILDFGAQ…VVDVCGCQTL (196 aa)) enclose the Glutamine amidotransferase type-1 domain. The active-site Nucleophile is C85. Catalysis depends on residues H177 and E179. Residues 204–396 (WTAANIIDDQ…LGLPRTMVYR (193 aa)) enclose the GMPS ATP-PPase domain. 231–237 (SGGVDSS) is an ATP binding site.

Homodimer.

The catalysed reaction is XMP + L-glutamine + ATP + H2O = GMP + L-glutamate + AMP + diphosphate + 2 H(+). It participates in purine metabolism; GMP biosynthesis; GMP from XMP (L-Gln route): step 1/1. In terms of biological role, catalyzes the synthesis of GMP from XMP. This Stenotrophomonas maltophilia (strain R551-3) protein is GMP synthase [glutamine-hydrolyzing].